The primary structure comprises 339 residues: Ketol-acid reductoisomerase (NADP(+)) (339 aa).

The region spanning Met-1–Thr-182 is the KARI N-terminal Rossmann domain. Residues Tyr-24–Gln-27, Arg-48, Ser-51, and Asp-83–Gln-86 contribute to the NADP(+) site. Residue His-108 is part of the active site. Gly-134 serves as a coordination point for NADP(+). In terms of domain architecture, KARI C-terminal knotted spans Ser-183–Ile-328. Mg(2+)-binding residues include Asp-191, Glu-195, Glu-227, and Glu-231. Position 252 (Ser-252) interacts with substrate.

It belongs to the ketol-acid reductoisomerase family. The cofactor is Mg(2+).

The catalysed reaction is (2R)-2,3-dihydroxy-3-methylbutanoate + NADP(+) = (2S)-2-acetolactate + NADPH + H(+). The enzyme catalyses (2R,3R)-2,3-dihydroxy-3-methylpentanoate + NADP(+) = (S)-2-ethyl-2-hydroxy-3-oxobutanoate + NADPH + H(+). It functions in the pathway amino-acid biosynthesis; L-isoleucine biosynthesis; L-isoleucine from 2-oxobutanoate: step 2/4. It participates in amino-acid biosynthesis; L-valine biosynthesis; L-valine from pyruvate: step 2/4. Involved in the biosynthesis of branched-chain amino acids (BCAA). Catalyzes an alkyl-migration followed by a ketol-acid reduction of (S)-2-acetolactate (S2AL) to yield (R)-2,3-dihydroxy-isovalerate. In the isomerase reaction, S2AL is rearranged via a Mg-dependent methyl migration to produce 3-hydroxy-3-methyl-2-ketobutyrate (HMKB). In the reductase reaction, this 2-ketoacid undergoes a metal-dependent reduction by NADPH to yield (R)-2,3-dihydroxy-isovalerate. The polypeptide is Ketol-acid reductoisomerase (NADP(+)) (Gluconacetobacter diazotrophicus (strain ATCC 49037 / DSM 5601 / CCUG 37298 / CIP 103539 / LMG 7603 / PAl5)).